Consider the following 178-residue polypeptide: UPF0114 protein HPSH_00970 (178 aa).

A run of 4 helical transmembrane segments spans residues 15 to 35 (WLLAPLCIAMSLVLVVLGYVF), 54 to 74 (LVLSALGLVDLLFMAGLVLMV), 102 to 122 (FNALKLKVSLSIVAISAIFLL), and 145 to 165 (PIFWQVVIHLVFVCSALLAAV).

The protein belongs to the UPF0114 family.

Its subcellular location is the cell membrane. The polypeptide is UPF0114 protein HPSH_00970 (Helicobacter pylori (strain Shi470)).